The chain runs to 160 residues: Probable transcriptional regulator YgiV (160 aa).

Functionally, represses expression of mcbR. This Escherichia coli O157:H7 protein is Probable transcriptional regulator YgiV (ygiV).